Consider the following 549-residue polypeptide: Protein EPD2 (549 aa).

A signal peptide spans M1–A20. The N-linked (GlcNAc...) asparagine glycan is linked to N41. A disulfide bridge links C82 with C111. N-linked (GlcNAc...) asparagine glycosylation is found at N173 and N261. 5 cysteine pairs are disulfide-bonded: C224-C358, C242-C273, C381-C432, C390-C456, and C409-C414. N467 is a glycosylation site (N-linked (GlcNAc...) asparagine). The disordered stretch occupies residues A470–I518. The segment covering S484 to S514 has biased composition (low complexity).

It belongs to the glycosyl hydrolase 72 family.

Its subcellular location is the cell membrane. This Candida maltosa (Yeast) protein is Protein EPD2 (EPD2).